We begin with the raw amino-acid sequence, 151 residues long: Large ribosomal subunit protein uL22 (151 aa).

Polar residues predominate over residues 1 to 18; sequence MARINYSINADPENTSKA. The disordered stretch occupies residues 1–23; the sequence is MARINYSINADPENTSKAMGSEL.

Belongs to the universal ribosomal protein uL22 family. Part of the 50S ribosomal subunit.

Functionally, this protein binds specifically to 23S rRNA. It makes multiple contacts with different domains of the 23S rRNA in the assembled 50S subunit and ribosome. In terms of biological role, the globular domain of the protein is located near the polypeptide exit tunnel on the outside of the subunit, while an extended beta-hairpin is found that lines the wall of the exit tunnel in the center of the 70S ribosome. In Methanosarcina mazei (strain ATCC BAA-159 / DSM 3647 / Goe1 / Go1 / JCM 11833 / OCM 88) (Methanosarcina frisia), this protein is Large ribosomal subunit protein uL22.